The following is a 442-amino-acid chain: tRNA-2-methylthio-N(6)-dimethylallyladenosine synthase (442 aa).

Residues 5 to 122 (KKVFIKTLGC…LPEMIKRKQS (118 aa)) form the MTTase N-terminal domain. The [4Fe-4S] cluster site is built by cysteine 14, cysteine 51, cysteine 85, cysteine 159, cysteine 163, and cysteine 166. In terms of domain architecture, Radical SAM core spans 145–378 (KAEGAKAYVS…DLLNSNAQII (234 aa)). The region spanning 380-442 (RQMVGTEQRI…LPNSLRGELI (63 aa)) is the TRAM domain.

The protein belongs to the methylthiotransferase family. MiaB subfamily. As to quaternary structure, monomer. It depends on [4Fe-4S] cluster as a cofactor.

The protein localises to the cytoplasm. It catalyses the reaction N(6)-dimethylallyladenosine(37) in tRNA + (sulfur carrier)-SH + AH2 + 2 S-adenosyl-L-methionine = 2-methylsulfanyl-N(6)-dimethylallyladenosine(37) in tRNA + (sulfur carrier)-H + 5'-deoxyadenosine + L-methionine + A + S-adenosyl-L-homocysteine + 2 H(+). Functionally, catalyzes the methylthiolation of N6-(dimethylallyl)adenosine (i(6)A), leading to the formation of 2-methylthio-N6-(dimethylallyl)adenosine (ms(2)i(6)A) at position 37 in tRNAs that read codons beginning with uridine. The chain is tRNA-2-methylthio-N(6)-dimethylallyladenosine synthase from Francisella philomiragia subsp. philomiragia (strain ATCC 25017 / CCUG 19701 / FSC 153 / O#319-036).